The primary structure comprises 214 residues: Probable chorismate pyruvate-lyase (214 aa).

Substrate-binding residues include Arg74, Leu112, and Glu173. Residues 183-214 (AAPENTGAGGTRLPRRIDTHHTPSKQEERPES) are disordered. Residues 197-214 (RRIDTHHTPSKQEERPES) are compositionally biased toward basic and acidic residues.

This sequence belongs to the UbiC family.

The protein localises to the cytoplasm. It catalyses the reaction chorismate = 4-hydroxybenzoate + pyruvate. Its pathway is cofactor biosynthesis; ubiquinone biosynthesis. In terms of biological role, removes the pyruvyl group from chorismate, with concomitant aromatization of the ring, to provide 4-hydroxybenzoate (4HB) for the ubiquinone pathway. The polypeptide is Probable chorismate pyruvate-lyase (Cupriavidus metallidurans (strain ATCC 43123 / DSM 2839 / NBRC 102507 / CH34) (Ralstonia metallidurans)).